A 358-amino-acid chain; its full sequence is DNA ligase C (358 aa).

Lys29 functions as the N6-AMP-lysine intermediate in the catalytic mechanism.

This sequence belongs to the ATP-dependent DNA ligase family. A divalent metal cation is required as a cofactor.

It catalyses the reaction ATP + (deoxyribonucleotide)n-3'-hydroxyl + 5'-phospho-(deoxyribonucleotide)m = (deoxyribonucleotide)n+m + AMP + diphosphate.. In terms of biological role, DNA ligase that seals nicks in double-stranded DNA during DNA replication, DNA recombination and DNA repair. This is DNA ligase C (ligC) from Mycobacterium tuberculosis (strain ATCC 25618 / H37Rv).